A 194-amino-acid chain; its full sequence is Adenylate kinase (194 aa).

11–16 (GSGKGT) contacts ATP. An NMP region spans residues 31-60 (STGELLRAEIKAQTELGQAAAGYINEGHLV). AMP-binding positions include T32, R37, 58-60 (HLV), 86-89 (GFPR), and Q93. The tract at residues 127–137 (NRGKISGRSDD) is LID. Position 128 (R128) interacts with ATP. R134 and R145 together coordinate AMP. G173 contributes to the ATP binding site.

This sequence belongs to the adenylate kinase family. In terms of assembly, monomer.

It is found in the cytoplasm. The enzyme catalyses AMP + ATP = 2 ADP. Its pathway is purine metabolism; AMP biosynthesis via salvage pathway; AMP from ADP: step 1/1. Catalyzes the reversible transfer of the terminal phosphate group between ATP and AMP. Plays an important role in cellular energy homeostasis and in adenine nucleotide metabolism. The polypeptide is Adenylate kinase (Porphyromonas gingivalis (strain ATCC 33277 / DSM 20709 / CIP 103683 / JCM 12257 / NCTC 11834 / 2561)).